Consider the following 436-residue polypeptide: [Pyruvate dehydrogenase (acetyl-transferring)] kinase isozyme 1, mitochondrial (436 aa).

Residues Met1 to Phe28 constitute a mitochondrion transit peptide. Position 136 is a phosphotyrosine; by FGFR1 (Tyr136). Residues Tyr163–Ser393 form the Histidine kinase domain. Tyr243 carries the phosphotyrosine; by FGFR1, ABL1, FLT3 and JAK2 modification. Residue Tyr244 is modified to Phosphotyrosine; by FGFR1. Residues Glu279–Arg286, Asp318, Ser337–Thr338, and Gly354–Leu359 each bind ATP. Residue Thr338 is modified to Phosphothreonine. Position 405 is an N6-succinyllysine (Lys405).

Belongs to the PDK/BCKDK protein kinase family. As to quaternary structure, homodimer, and heterodimer with PDK2. Interacts with the pyruvate dehydrogenase complex subunit DLAT, and is part of the multimeric pyruvate dehydrogenase complex that contains multiple copies of pyruvate dehydrogenase (E1), dihydrolipoamide acetyltransferase (DLAT, E2) and lipoamide dehydrogenase (DLD, E3). Interacts with phosphoglycerate kinase PGK1; the interaction is direct, occurs under hypoxic conditions and leads to PDK1-mediated inhibition of pyruvate dehydrogenase complex activity. In terms of processing, phosphorylated by constitutively activated ABL1, FGFR1, FLT3 and JAK2 (in vitro), and this may also occur in cancer cells that express constitutively activated ABL1, FGFR1, FLT3 and JAK2. Phosphorylation at Tyr-243 and Tyr-244 strongly increases kinase activity, while phosphorylation at Tyr-136 has a lesser effect. Phosphorylated under hypoxic conditions at Thr-338 by phosphoglycerate kinase PGK1 which has an activating effect. In terms of tissue distribution, expressed predominantly in the heart. Detected at lower levels in liver, skeletal muscle and pancreas.

It localises to the mitochondrion matrix. It carries out the reaction L-seryl-[pyruvate dehydrogenase E1 alpha subunit] + ATP = O-phospho-L-seryl-[pyruvate dehydrogenase E1 alpha subunit] + ADP + H(+). With respect to regulation, activity is enhanced by binding to the pyruvate dehydrogenase subunit DLAT. Inhibited by AZD7545; this compound interferes with DLAT binding and thereby inhibits kinase activity. Inhibited by dichloroacetate and radicicol. Activated under hypoxic conditions by phosphoglycerate kinase PGK1-mediated phosphorylation at Thr-338. Kinase that plays a key role in regulation of glucose and fatty acid metabolism and homeostasis via phosphorylation of the pyruvate dehydrogenase subunits PDHA1 and PDHA2. This inhibits pyruvate dehydrogenase activity, and thereby regulates metabolite flux through the tricarboxylic acid cycle, down-regulates aerobic respiration and inhibits the formation of acetyl-coenzyme A from pyruvate. Plays an important role in cellular responses to hypoxia and is important for cell proliferation under hypoxia. The polypeptide is [Pyruvate dehydrogenase (acetyl-transferring)] kinase isozyme 1, mitochondrial (PDK1) (Homo sapiens (Human)).